The primary structure comprises 1060 residues: Carbamoyl phosphate synthase large chain (1060 aa).

A carboxyphosphate synthetic domain region spans residues 1–401 (MPKRTDIRKI…SLLKAVRSLE (401 aa)). Residues R129, R169, G175, G176, Q208, I210, E215, G241, I242, H243, Q284, and E298 each coordinate ATP. The ATP-grasp 1 domain maps to 133–327 (KNLMNQLNEP…IAKMAAKIAV (195 aa)). The Mg(2+) site is built by Q284, E298, and N300. Residues Q284, E298, and N300 each coordinate Mn(2+). An oligomerization domain region spans residues 402 to 546 (IGTAHLELDG…YTTYEQENES (145 aa)). Positions 547–929 (LVSAKPSILV…ALYKAFEASG (383 aa)) are carbamoyl phosphate synthetic domain. Positions 671-861 (DQLIQELNIP…MAQLATQLIL (191 aa)) constitute an ATP-grasp 2 domain. Residues R707, R746, L748, E752, G777, V778, H779, S780, Q820, and E832 each coordinate ATP. Positions 820, 832, and 834 each coordinate Mg(2+). 3 residues coordinate Mn(2+): Q820, E832, and N834. Residues 930 to 1060 (MHLPSHGNVL…ESQSLLTKPL (131 aa)) enclose the MGS-like domain. Positions 930–1060 (MHLPSHGNVL…ESQSLLTKPL (131 aa)) are allosteric domain.

Belongs to the CarB family. Composed of two chains; the small (or glutamine) chain promotes the hydrolysis of glutamine to ammonia, which is used by the large (or ammonia) chain to synthesize carbamoyl phosphate. Tetramer of heterodimers (alpha,beta)4. The cofactor is Mg(2+). Requires Mn(2+) as cofactor.

The enzyme catalyses hydrogencarbonate + L-glutamine + 2 ATP + H2O = carbamoyl phosphate + L-glutamate + 2 ADP + phosphate + 2 H(+). The catalysed reaction is hydrogencarbonate + NH4(+) + 2 ATP = carbamoyl phosphate + 2 ADP + phosphate + 2 H(+). It participates in amino-acid biosynthesis; L-arginine biosynthesis; carbamoyl phosphate from bicarbonate: step 1/1. The protein operates within pyrimidine metabolism; UMP biosynthesis via de novo pathway; (S)-dihydroorotate from bicarbonate: step 1/3. Its function is as follows. Large subunit of the glutamine-dependent carbamoyl phosphate synthetase (CPSase). CPSase catalyzes the formation of carbamoyl phosphate from the ammonia moiety of glutamine, carbonate, and phosphate donated by ATP, constituting the first step of 2 biosynthetic pathways, one leading to arginine and/or urea and the other to pyrimidine nucleotides. The large subunit (synthetase) binds the substrates ammonia (free or transferred from glutamine from the small subunit), hydrogencarbonate and ATP and carries out an ATP-coupled ligase reaction, activating hydrogencarbonate by forming carboxy phosphate which reacts with ammonia to form carbamoyl phosphate. This is Carbamoyl phosphate synthase large chain from Latilactobacillus sakei subsp. sakei (strain 23K) (Lactobacillus sakei subsp. sakei).